Consider the following 219-residue polypeptide: Ras-related protein Rab-3B (219 aa).

Position 2 is an N-acetylalanine (Ala-2). Residues Ser-31, Ser-32, Val-33, Gly-34, Lys-35, Thr-36, Ser-37, Pro-49, and Ser-53 each coordinate GTP. Ser-32 lines the GDP pocket. GDP is bound by residues Gly-34, Lys-35, Thr-36, and Ser-37. Thr-36 lines the Mg(2+) pocket. The Switch 1 motif lies at 45 to 58 (DTFTPAFVSTVGID). 2 residues coordinate Mg(2+): Thr-54 and Asp-77. The Switch 2 motif lies at 78–96 (TAGQERYRTITTAYYRGAM). Gly-80 contacts GTP. Thr-86 bears the Phosphothreonine; by LRRK2 mark. GTP is bound by residues Asn-135, Lys-136, and Asp-138. Residues Asn-135, Lys-136, Asp-138, Met-139, Ala-166, and Lys-167 each coordinate GDP. Residues Ala-166 and Lys-167 each coordinate GTP. Phosphoserine is present on residues Ser-188 and Ser-190. 2 S-geranylgeranyl cysteine lipidation sites follow: Cys-217 and Cys-219. Cys-219 bears the Cysteine methyl ester mark.

The protein belongs to the small GTPase superfamily. Rab family. As to quaternary structure, interacts with RIMS1, RIMS2, RPH3A and RPH3AL. The GTP-bound form interacts with GAS8/DRC4 (via coiled-coil domains). The GTP-bound form interacts with REP15. Interacts with GDI2, CHM and CHML; phosphorylation at Thr-86 disrupts these interactions. Interacts with MADD (via uDENN domain); the GTP-bound form is preferred for interaction. It depends on Mg(2+) as a cofactor. In terms of processing, phosphorylation of Thr-86 in the switch II region by LRRK2 prevents the association of RAB regulatory proteins, including CHM, CHML and RAB GDP dissociation inhibitor GDI2.

It is found in the cell membrane. Its subcellular location is the golgi apparatus. It catalyses the reaction GTP + H2O = GDP + phosphate + H(+). Regulated by guanine nucleotide exchange factors (GEFs) which promote the exchange of bound GDP for free GTP. Regulated by GTPase activating proteins (GAPs) which increase the GTP hydrolysis activity. Inhibited by GDP dissociation inhibitors (GDIs) which prevent Rab-GDP dissociation. Functionally, the small GTPases Rab are key regulators of intracellular membrane trafficking, from the formation of transport vesicles to their fusion with membranes. Rabs cycle between an inactive GDP-bound form and an active GTP-bound form that is able to recruit to membranes different sets of downstream effectors directly responsible for vesicle formation, movement, tethering and fusion. The polypeptide is Ras-related protein Rab-3B (Homo sapiens (Human)).